The chain runs to 721 residues: Ribonuclease R (721 aa).

Positions 249–587 (RRSIIDREII…VHRLLWMFIF (339 aa)) constitute an RNB domain. Residues 639 to 719 (GKEFIGVVTT…LTRKIDFELV (81 aa)) form the S1 motif domain.

The protein belongs to the RNR ribonuclease family. RNase R subfamily.

The protein localises to the cytoplasm. The enzyme catalyses Exonucleolytic cleavage in the 3'- to 5'-direction to yield nucleoside 5'-phosphates.. In terms of biological role, 3'-5' exoribonuclease that releases 5'-nucleoside monophosphates and is involved in maturation of structured RNAs. This is Ribonuclease R from Ureaplasma parvum serovar 3 (strain ATCC 700970).